The chain runs to 132 residues: Heat shock protein 15 homolog (132 aa).

Residues valine 11 to valine 73 form the S4 RNA-binding domain. Composition is skewed to basic and acidic residues over residues leucine 94–arginine 105 and proline 114–glutamine 125. Residues leucine 94–tyrosine 132 form a disordered region.

The protein belongs to the HSP15 family.

Functionally, may play an important role in binding of nucleic acid. More specific for RNA. The protein is Heat shock protein 15 homolog (hslR) of Aeromonas salmonicida.